We begin with the raw amino-acid sequence, 373 residues long: DNA replication and repair protein RecF (373 aa).

30-37 (GPNGQGKT) serves as a coordination point for ATP.

The protein belongs to the RecF family.

It localises to the cytoplasm. Its function is as follows. The RecF protein is involved in DNA metabolism; it is required for DNA replication and normal SOS inducibility. RecF binds preferentially to single-stranded, linear DNA. It also seems to bind ATP. The chain is DNA replication and repair protein RecF from Streptomyces avermitilis (strain ATCC 31267 / DSM 46492 / JCM 5070 / NBRC 14893 / NCIMB 12804 / NRRL 8165 / MA-4680).